Reading from the N-terminus, the 455-residue chain is Acid sphingomyelinase-like phosphodiesterase 3b (455 aa).

An N-terminal signal peptide occupies residues 1–18; that stretch reads MRLLAWLIFLANWGGARA. 2 residues coordinate Zn(2+): aspartate 28 and histidine 30. A disulfide bridge links cysteine 45 with cysteine 64. N-linked (GlcNAc...) asparagine glycosylation occurs at asparagine 72. The Zn(2+) site is built by aspartate 93 and asparagine 134. Residue asparagine 164 is glycosylated (N-linked (GlcNAc...) asparagine). Residues histidine 236, histidine 277, and histidine 279 each contribute to the Zn(2+) site. Asparagine 343 carries an N-linked (GlcNAc...) asparagine glycan. Intrachain disulfides connect cysteine 405-cysteine 409 and cysteine 415-cysteine 428.

The protein belongs to the acid sphingomyelinase family. As to quaternary structure, interacts with TLR4, TLR7, TLR8 and TLR9. Zn(2+) is required as a cofactor. In terms of processing, N-glycosylated.

It localises to the secreted. It is found in the cell membrane. Functionally, lipid-modulating phosphodiesterase. Active on the surface of macrophages and dendritic cells and strongly influences macrophage lipid composition and membrane fluidity. Acts as a negative regulator of Toll-like receptor signaling. Has in vitro phosphodiesterase activity, but the physiological substrate is unknown. Lacks activity with phosphocholine-containing lipids, but can cleave CDP-choline, and can release phosphate from ATP and ADP (in vitro). This chain is Acid sphingomyelinase-like phosphodiesterase 3b (SMPDL3B), found in Homo sapiens (Human).